The following is a 224-amino-acid chain: 7-cyano-7-deazaguanine synthase (224 aa).

12–22 lines the ATP pocket; sequence MSGGMDSTLGA. Residues Cys-191, Cys-199, Cys-202, and Cys-205 each coordinate Zn(2+).

The protein belongs to the QueC family. Zn(2+) serves as cofactor.

The enzyme catalyses 7-carboxy-7-deazaguanine + NH4(+) + ATP = 7-cyano-7-deazaguanine + ADP + phosphate + H2O + H(+). The protein operates within purine metabolism; 7-cyano-7-deazaguanine biosynthesis. In terms of biological role, catalyzes the ATP-dependent conversion of 7-carboxy-7-deazaguanine (CDG) to 7-cyano-7-deazaguanine (preQ(0)). The sequence is that of 7-cyano-7-deazaguanine synthase from Sulfurimonas denitrificans (strain ATCC 33889 / DSM 1251) (Thiomicrospira denitrificans (strain ATCC 33889 / DSM 1251)).